The chain runs to 336 residues: HTH-type transcriptional regulator SyrM (336 aa).

An HTH lysR-type domain is found at 41–98; that stretch reads IDLNLLVALEALLEYRNVTHAGQHIGRSQPAMSRALGRLRGLFNDDLLVRSSTGLIPT. Residues 58–77 constitute a DNA-binding region (H-T-H motif); sequence VTHAGQHIGRSQPAMSRALG.

It belongs to the LysR transcriptional regulatory family.

Its function is as follows. Acts in trans to stimulate nod gene expression via nodD3 and exo gene expression via SyrA. This is HTH-type transcriptional regulator SyrM (syrM) from Rhizobium etli.